The sequence spans 338 residues: S-adenosylmethionine:tRNA ribosyltransferase-isomerase (338 aa).

It belongs to the QueA family. In terms of assembly, monomer.

Its subcellular location is the cytoplasm. It carries out the reaction 7-aminomethyl-7-carbaguanosine(34) in tRNA + S-adenosyl-L-methionine = epoxyqueuosine(34) in tRNA + adenine + L-methionine + 2 H(+). It participates in tRNA modification; tRNA-queuosine biosynthesis. Functionally, transfers and isomerizes the ribose moiety from AdoMet to the 7-aminomethyl group of 7-deazaguanine (preQ1-tRNA) to give epoxyqueuosine (oQ-tRNA). This Francisella tularensis subsp. tularensis (strain WY96-3418) protein is S-adenosylmethionine:tRNA ribosyltransferase-isomerase.